The primary structure comprises 365 residues: Isopentenyl-diphosphate delta-isomerase (365 aa).

A substrate-binding site is contributed by 4–5 (RK). Residues 62–64 (GMT), S92, and N121 each bind FMN. 92 to 94 (SQR) is a substrate binding site. Q155 is a binding site for substrate. E156 contributes to the Mg(2+) binding site. FMN is bound by residues K187, T216, 267–269 (GVR), and 288–289 (AL).

It belongs to the IPP isomerase type 2 family. As to quaternary structure, homooctamer. Dimer of tetramers. It depends on FMN as a cofactor. NADPH serves as cofactor. Mg(2+) is required as a cofactor.

The protein resides in the cytoplasm. The catalysed reaction is isopentenyl diphosphate = dimethylallyl diphosphate. In terms of biological role, involved in the biosynthesis of isoprenoids. Catalyzes the 1,3-allylic rearrangement of the homoallylic substrate isopentenyl (IPP) to its allylic isomer, dimethylallyl diphosphate (DMAPP). The protein is Isopentenyl-diphosphate delta-isomerase of Methanopyrus kandleri (strain AV19 / DSM 6324 / JCM 9639 / NBRC 100938).